The sequence spans 184 residues: UPF0301 protein RHOS4_26140 (184 aa).

The protein belongs to the UPF0301 (AlgH) family.

In Cereibacter sphaeroides (strain ATCC 17023 / DSM 158 / JCM 6121 / CCUG 31486 / LMG 2827 / NBRC 12203 / NCIMB 8253 / ATH 2.4.1.) (Rhodobacter sphaeroides), this protein is UPF0301 protein RHOS4_26140.